Here is an 89-residue protein sequence, read N- to C-terminus: Small ribosomal subunit protein uS15 (89 aa).

The protein belongs to the universal ribosomal protein uS15 family. As to quaternary structure, part of the 30S ribosomal subunit. Forms a bridge to the 50S subunit in the 70S ribosome, contacting the 23S rRNA.

Its function is as follows. One of the primary rRNA binding proteins, it binds directly to 16S rRNA where it helps nucleate assembly of the platform of the 30S subunit by binding and bridging several RNA helices of the 16S rRNA. Forms an intersubunit bridge (bridge B4) with the 23S rRNA of the 50S subunit in the ribosome. The protein is Small ribosomal subunit protein uS15 of Blochmanniella pennsylvanica (strain BPEN).